We begin with the raw amino-acid sequence, 338 residues long: MIELHQVSKSFNVNGKTVEAVKNVSITVEKGEIFGVVGYSGAGKSTLVRCINLLERPDAGQVVIDGKNLSTLSSKELRVARRKIGMIFQGYNLLKTATVYDNIAKPLKLEGVPKNEIETRVNKYLSIVGLEDKRNNYPSQLSGGQKQRVAIARALAHEPEILLSDEATSALDPETTEAILQLLLKINAELGITIFLITHELDVIQRICDRVAVMENGHLVEQGTVLDIFTKAKHATTKRFVGSEASFDIPQDLLEKYVATGKLVSLHFIGDEADEPALALVSRKFDVLPSILAGGIDHLKNGTLGKLLVHLKGDEVEYSKAISYLKESGVVVEEVELL.

Positions 2-241 (IELHQVSKSF…AKHATTKRFV (240 aa)) constitute an ABC transporter domain. Residue 38 to 45 (GYSGAGKS) participates in ATP binding.

The protein belongs to the ABC transporter superfamily. Methionine importer (TC 3.A.1.24) family. The complex is composed of two ATP-binding proteins (MetN), two transmembrane proteins (MetI) and a solute-binding protein (MetQ).

The protein localises to the cell membrane. The enzyme catalyses L-methionine(out) + ATP + H2O = L-methionine(in) + ADP + phosphate + H(+). The catalysed reaction is D-methionine(out) + ATP + H2O = D-methionine(in) + ADP + phosphate + H(+). Functionally, part of the ABC transporter complex MetNIQ involved in methionine import. Responsible for energy coupling to the transport system. The chain is Methionine import ATP-binding protein MetN 1 from Listeria monocytogenes serovar 1/2a (strain ATCC BAA-679 / EGD-e).